A 93-amino-acid polypeptide reads, in one-letter code: Small ribosomal subunit protein uS19 (93 aa).

It belongs to the universal ribosomal protein uS19 family.

Functionally, protein S19 forms a complex with S13 that binds strongly to the 16S ribosomal RNA. This is Small ribosomal subunit protein uS19 from Frankia alni (strain DSM 45986 / CECT 9034 / ACN14a).